The primary structure comprises 149 residues: Large ribosomal subunit protein uL15 (149 aa).

Composition is skewed to basic residues over residues 1-13 (MPTR…KHRG) and 21-42 (RIGK…HHHR). The interval 1–44 (MPTRLTKTRKHRGNVSAGKGRIGKHRKHPGGRGKAGGQHHHRTN) is disordered.

The protein belongs to the universal ribosomal protein uL15 family. Component of the large ribosomal subunit. Mature ribosomes consist of a small (40S) and a large (60S) subunit. The 40S subunit contains about 32 different proteins and 1 molecule of RNA (18S). The 60S subunit contains 45 different proteins and 3 molecules of RNA (25S, 5.8S and 5S).

It is found in the cytoplasm. Its function is as follows. Component of the ribosome, a large ribonucleoprotein complex responsible for the synthesis of proteins in the cell. The small ribosomal subunit (SSU) binds messenger RNAs (mRNAs) and translates the encoded message by selecting cognate aminoacyl-transfer RNA (tRNA) molecules. The large subunit (LSU) contains the ribosomal catalytic site termed the peptidyl transferase center (PTC), which catalyzes the formation of peptide bonds, thereby polymerizing the amino acids delivered by tRNAs into a polypeptide chain. The nascent polypeptides leave the ribosome through a tunnel in the LSU and interact with protein factors that function in enzymatic processing, targeting, and the membrane insertion of nascent chains at the exit of the ribosomal tunnel. The sequence is that of Large ribosomal subunit protein uL15 from Candida albicans (strain SC5314 / ATCC MYA-2876) (Yeast).